A 136-amino-acid polypeptide reads, in one-letter code: Large ribosomal subunit protein uL16 (136 aa).

Belongs to the universal ribosomal protein uL16 family. As to quaternary structure, part of the 50S ribosomal subunit.

Functionally, binds 23S rRNA and is also seen to make contacts with the A and possibly P site tRNAs. This Hamiltonella defensa subsp. Acyrthosiphon pisum (strain 5AT) protein is Large ribosomal subunit protein uL16.